A 252-amino-acid chain; its full sequence is Imidazole glycerol phosphate synthase subunit HisF (252 aa).

Catalysis depends on residues D13 and D132.

This sequence belongs to the HisA/HisF family. As to quaternary structure, heterodimer of HisH and HisF.

The protein localises to the cytoplasm. It carries out the reaction 5-[(5-phospho-1-deoxy-D-ribulos-1-ylimino)methylamino]-1-(5-phospho-beta-D-ribosyl)imidazole-4-carboxamide + L-glutamine = D-erythro-1-(imidazol-4-yl)glycerol 3-phosphate + 5-amino-1-(5-phospho-beta-D-ribosyl)imidazole-4-carboxamide + L-glutamate + H(+). It functions in the pathway amino-acid biosynthesis; L-histidine biosynthesis; L-histidine from 5-phospho-alpha-D-ribose 1-diphosphate: step 5/9. IGPS catalyzes the conversion of PRFAR and glutamine to IGP, AICAR and glutamate. The HisF subunit catalyzes the cyclization activity that produces IGP and AICAR from PRFAR using the ammonia provided by the HisH subunit. This chain is Imidazole glycerol phosphate synthase subunit HisF, found in Campylobacter fetus subsp. fetus (strain 82-40).